A 233-amino-acid polypeptide reads, in one-letter code: Leucyl/phenylalanyl-tRNA--protein transferase (233 aa).

It belongs to the L/F-transferase family.

The protein resides in the cytoplasm. It catalyses the reaction N-terminal L-lysyl-[protein] + L-leucyl-tRNA(Leu) = N-terminal L-leucyl-L-lysyl-[protein] + tRNA(Leu) + H(+). The enzyme catalyses N-terminal L-arginyl-[protein] + L-leucyl-tRNA(Leu) = N-terminal L-leucyl-L-arginyl-[protein] + tRNA(Leu) + H(+). The catalysed reaction is L-phenylalanyl-tRNA(Phe) + an N-terminal L-alpha-aminoacyl-[protein] = an N-terminal L-phenylalanyl-L-alpha-aminoacyl-[protein] + tRNA(Phe). Functions in the N-end rule pathway of protein degradation where it conjugates Leu, Phe and, less efficiently, Met from aminoacyl-tRNAs to the N-termini of proteins containing an N-terminal arginine or lysine. This Shewanella denitrificans (strain OS217 / ATCC BAA-1090 / DSM 15013) protein is Leucyl/phenylalanyl-tRNA--protein transferase.